The sequence spans 179 residues: Transcriptional repressor NrdR (179 aa).

Residues 3-34 (CPYCQHTNSRVLESRSSEGGQSIRRRRECLCC) fold into a zinc finger. The 91-residue stretch at 49–139 (ITVIKHDGKK…VYGRFQGIKD (91 aa)) folds into the ATP-cone domain. Residues 160 to 179 (KPANDDFSEQETPSTVMMPS) are disordered. Over residues 169–179 (QETPSTVMMPS) the composition is skewed to polar residues.

This sequence belongs to the NrdR family. Zn(2+) serves as cofactor.

Negatively regulates transcription of bacterial ribonucleotide reductase nrd genes and operons by binding to NrdR-boxes. In Rippkaea orientalis (strain PCC 8801 / RF-1) (Cyanothece sp. (strain PCC 8801)), this protein is Transcriptional repressor NrdR.